A 426-amino-acid chain; its full sequence is C4-dicarboxylate transport protein (426 aa).

The next 8 helical transmembrane spans lie at 8–28, 44–64, 78–98, 148–168, 173–193, 222–242, 297–317, and 355–375; these read VLYVQVIVAIIIGIGLGHFYP, LIKMVIGPIIFCTVVTGIAGM, LLYFEIVSTFALVLGLIATHV, GEILQILLIALLFGAVLATAG, VVTGFIDGLSHVLFGIVRIIT, LIGTFYLTSVVFVVVVLGIIA, GYSFNLDGTNIYMTMAVLFIA, and AATLAVVPTIPLSGMVLILGI.

This sequence belongs to the dicarboxylate/amino acid:cation symporter (DAACS) (TC 2.A.23) family.

The protein localises to the cell inner membrane. Responsible for the transport of dicarboxylates such as succinate, fumarate, and malate from the periplasm across the membrane. The polypeptide is C4-dicarboxylate transport protein (Paraburkholderia xenovorans (strain LB400)).